Here is a 259-residue protein sequence, read N- to C-terminus: MKLNERSVAHYALSDSPADHMGFLRTWGGPGTPPTPSGTGRRCWFVLKGNLLFSFESREGRAPLSLVVLEGCTVELAEAPVPEEFAFAICFDAPGVRPHLLAAEGPAAQEAWVKVLSRASFGYMRLVVRELESQLQDARQSLALQRRSSWKSVASRCKPQAPNHRAAGLENGHCLSKDSSPVGLVEEAGSRSAGWGLAEWELQGPASLLLGKGQSPVSPETSCFSTLHDWYGQEIVELRQCWQKRAQGSHSKCEEQDRP.

Residues 17-121 form the PH domain; sequence PADHMGFLRT…WVKVLSRASF (105 aa). A coiled-coil region spans residues 124–149; the sequence is MRLVVRELESQLQDARQSLALQRRSS. Residues 223-235 carry the F&amp;H motif; it reads CFSTLHDWYGQEI.

Belongs to the sesquipedalian family. As to quaternary structure, forms homodimers and heterodimers with PHETA1. Interacts with OCRL and INPP5B.

The protein resides in the early endosome. Its subcellular location is the recycling endosome. It localises to the golgi apparatus. The protein localises to the trans-Golgi network. It is found in the cytoplasmic vesicle. The protein resides in the clathrin-coated vesicle. In terms of biological role, plays a role in endocytic trafficking. Required for receptor recycling from endosomes, both to the trans-Golgi network and the plasma membrane. The sequence is that of Sesquipedalian-2 from Homo sapiens (Human).